Reading from the N-terminus, the 359-residue chain is Mitochondrial glutathione transporter SLC25A39 (359 aa).

Over 1–14 (MDDQDPGGISPLQQ) the chain is Mitochondrial intermembrane. Solcar repeat units follow at residues 9–151 (ISPL…LKAF), 159–243 (SDLY…VKSQ), and 253–347 (TSVG…GKSF). A helical transmembrane segment spans residues 15-35 (MVASGAGAVVTSLFMTPLDVV). Residues 36 to 121 (KVRLQSQRPT…VKIVRHEGTR (86 aa)) are Mitochondrial matrix-facing. Residues C74, C78, C88, and C94 each coordinate [2Fe-2S] cluster. The helical transmembrane segment at 122 to 142 (TLWSGLPATLVMTVPATAIYF) threads the bilayer. The Mitochondrial intermembrane portion of the chain corresponds to 143–164 (TAYDQLKAFLCGQSLTSDLYAP). The helical transmembrane segment at 165 to 185 (MVAGALARMGTVTVVSPLELV) threads the bilayer. The Mitochondrial matrix segment spans residues 186 to 214 (RTKLQAQHVSYRELAACVQAAVAQGGWRS). The helical transmembrane segment at 215-235 (LWLGWGPTALRDVPFSALYWF) threads the bilayer. Topologically, residues 236–255 (NYELVKSQLNGPRQKEQTSV) are mitochondrial intermembrane. Residues 256–276 (GISFVAGGISGMVAATLTLPF) form a helical membrane-spanning segment. Topologically, residues 277 to 317 (DVVKTQRQMSLGAVEAMRVKPPRVDSTWLLLRRIQAESGTR) are mitochondrial matrix. The chain crosses the membrane as a helical span at residues 318–338 (GLFAGFLPRIIKAAPSCAIMI). The Mitochondrial intermembrane segment spans residues 339-359 (STYEFGKSFFHRLNQEQPLGH).

The protein belongs to the mitochondrial carrier (TC 2.A.29) family. In terms of processing, cleaved and degraded by AFG3L2; degradation by AFG3L2 is regulated by the ability of SLC25A39 to bind iron-sulfur. In absence of mitochondrial glutathione, SLC25A39 binds iron-sulfur, preventing cleavage and degradation by AFG3L2. The presence of mitochondrial glutathione prevents iron-sulfur-binding to SLC25A39, promoting cleavage and degradation by AFG3L2.

It is found in the mitochondrion inner membrane. It carries out the reaction glutathione(in) = glutathione(out). With respect to regulation, the activity of SLC25A39 is regulated by levels of mitochondrial glutathione via its ability to bind [2Fe-2S] iron-sulfur cluster. Upon physiological levels of mitochondrial glutathione, glutathione prevents iron-sulfur-binding to SLC25A39 promoting cleavage and degradation by AFG3L2. Upon depletion of mitochondrial glutathione, SLC25A39 binds iron-sulfur, preventing cleavage and degradation by AFG3L2. Its function is as follows. Mitochondrial transporter required for glutathione import into mitochondria. Glutathione, which plays key roles in oxidative metabolism, is produced exclusively in the cytosol and is imported in many organelles. Mitochondrial glutathione is required for the activity and stability of proteins containing iron-sulfur clusters, as well as erythropoiesis. In Rattus norvegicus (Rat), this protein is Mitochondrial glutathione transporter SLC25A39 (Slc25a39).